Reading from the N-terminus, the 234-residue chain is Large ribosomal subunit protein uL1 (234 aa).

Belongs to the universal ribosomal protein uL1 family. Part of the 50S ribosomal subunit.

Functionally, binds directly to 23S rRNA. The L1 stalk is quite mobile in the ribosome, and is involved in E site tRNA release. In terms of biological role, protein L1 is also a translational repressor protein, it controls the translation of the L11 operon by binding to its mRNA. In Helicobacter pylori (strain Shi470), this protein is Large ribosomal subunit protein uL1.